We begin with the raw amino-acid sequence, 601 residues long: Ubiquilin-4 (601 aa).

In terms of domain architecture, Ubiquitin-like spans 13 to 87 (IRVTVKTPKD…VHLVIKTPQK (75 aa)). Glycyl lysine isopeptide (Lys-Gly) (interchain with G-Cter in SUMO2) cross-links involve residues lysine 23 and lysine 62. A disordered region spans residues 87–155 (KAQDPAAATA…GAGEGSPSAT (69 aa)). Residues 88–138 (AQDPAAATASSPSTPDPASAPSTTPASPATPAQPSTSGSASSDAGSGSRRS) show a composition bias toward low complexity. 2 positions are modified to phosphoserine: serine 98 and serine 144. Residues 139-149 (SGGGPSPGAGE) show a composition bias toward gly residues. STI1 domains are found at residues 192 to 229 (NPEM…QQLM) and 230 to 261 (ERNP…MQEM). A Phosphothreonine modification is found at threonine 287. Positions 301–366 (FGNNPFSSLA…QVHPTVSNPF (66 aa)) are disordered. A compositionally biased stretch (low complexity) spans 307–318 (SSLAGNSDSSSS). Serine 318 carries the post-translational modification Phosphoserine; by ATM. Residues 329 to 340 (LPNPWSPSPPTS) show a composition bias toward pro residues. Gly residues predominate over residues 344-354 (GSGGEGTGGSG). Polar residues predominate over residues 357–366 (QVHPTVSNPF). STI1 domains follow at residues 393–440 (NPQL…QEQL) and 444–476 (LPVF…QQGL). Positions 490 to 533 (LGSFGISRTPAPSAGSNAGSTPEAPTSSPATPATSSPTGASSAQ) are disordered. Positions 507 to 533 (AGSTPEAPTSSPATPATSSPTGASSAQ) are enriched in low complexity. The UBA domain occupies 553–598 (QTPEVRFQQQLEQLNSMGFINREANLQALIATGGDINAAIERLLGS).

As to quaternary structure, homooligomer. Binds signal sequences of proteins that are targeted to the endoplasmic reticulum. Interacts (via UBA domain) with GJA1 (not ubiquitinated) and with ubiquitin; both compete for the same binding site. Interacts (via UBA domain) with ubiquitin and with polyubiquitin chains. Interacts (via ubiquitin-like domain) with PSMD2 and PSMD4, regulatory subunits of the 26S proteasome. Interacts with ATXN1/SCA1; interaction with ATXN1 inhibits polyubiquitination of UBQLN4 and interferes with PSMD4 binding. Interacts with HERPUD1. Interacts (via ubiquitin-like domain) with UBQLN1 (via UBA domain). Interacts with UBQLN2. Interacts (via STI1 1 and 2 domains) with MAP1LC3A/B/C. Interacts with BAG6. Interacts with MRE11 (when ubiquitinated); interaction with ubiquitinated MRE11 leads to MRE11 removal from chromatin. Interacts with DESI1/POST; leading to nuclear export. Interacts with BCL2A1 and BCL2L10. (Microbial infection) Interacts with Mumps virus protein SH. In terms of processing, phosphorylated by ATM at Ser-318 in response to DNA damage, leading to localization in the nucleus and recruitment to sites of DNA damage. Ubiquitinated; this does not lead to proteasomal degradation. May undergo both 'Lys-48'- and 'Lys-63'-linked polyubiquitination. In terms of tissue distribution, highly expressed in pancreas, kidney, skeletal muscle, heart and throughout the brain, and at lower levels in placenta, lung and liver.

The protein resides in the nucleus. Its subcellular location is the cytoplasm. The protein localises to the chromosome. It localises to the endoplasmic reticulum. It is found in the perinuclear region. The protein resides in the cytoplasmic vesicle. Its subcellular location is the autophagosome. In terms of biological role, regulator of protein degradation that mediates the proteasomal targeting of misfolded, mislocalized or accumulated proteins. Acts by binding polyubiquitin chains of target proteins via its UBA domain and by interacting with subunits of the proteasome via its ubiquitin-like domain. Key regulator of DNA repair that represses homologous recombination repair: in response to DNA damage, recruited to sites of DNA damage following phosphorylation by ATM and acts by binding and removing ubiquitinated MRE11 from damaged chromatin, leading to MRE11 degradation by the proteasome. MRE11 degradation prevents homologous recombination repair, redirecting double-strand break repair toward non-homologous end joining (NHEJ). Specifically recognizes and binds mislocalized transmembrane-containing proteins and targets them to proteasomal degradation. Collaborates with DESI1/POST in the export of ubiquitinated proteins from the nucleus to the cytoplasm. Also plays a role in the regulation of the proteasomal degradation of non-ubiquitinated GJA1. Acts as an adapter protein that recruits UBQLN1 to the autophagy machinery. Mediates the association of UBQLN1 with autophagosomes and the autophagy-related protein LC3 (MAP1LC3A/B/C) and may assist in the maturation of autophagosomes to autolysosomes by mediating autophagosome-lysosome fusion. This is Ubiquilin-4 from Homo sapiens (Human).